Consider the following 305-residue polypeptide: Ribonuclease H (305 aa).

The catalysed reaction is Endonucleolytic cleavage to 5'-phosphomonoester.. In terms of biological role, plays essential roles in DNA replication by removing the RNA primers from lagging strand fragments. Exhibits 5'to 3' exonuclease activity on either RNA/DNA or DNA/DNA duplexes and endonuclease activity on either flap or fork DNA structures. This is Ribonuclease H (rnh) from Enterobacteria phage T4 (Bacteriophage T4).